We begin with the raw amino-acid sequence, 434 residues long: Enolase (434 aa).

Gln163 provides a ligand contact to (2R)-2-phosphoglycerate. Catalysis depends on Glu205, which acts as the Proton donor. Mg(2+) is bound by residues Asp242, Glu291, and Asp318. (2R)-2-phosphoglycerate contacts are provided by Lys343, Arg372, Ser373, and Lys394. Residue Lys343 is the Proton acceptor of the active site.

It belongs to the enolase family. It depends on Mg(2+) as a cofactor.

Its subcellular location is the cytoplasm. It localises to the secreted. The protein resides in the cell surface. The protein localises to the cell wall. The enzyme catalyses (2R)-2-phosphoglycerate = phosphoenolpyruvate + H2O. The protein operates within carbohydrate degradation; glycolysis; pyruvate from D-glyceraldehyde 3-phosphate: step 4/5. Functionally, catalyzes the reversible conversion of 2-phosphoglycerate (2-PG) into phosphoenolpyruvate (PEP). It is essential for the degradation of carbohydrates via glycolysis. The chain is Enolase from Streptococcus pneumoniae serotype 2 (strain D39 / NCTC 7466).